We begin with the raw amino-acid sequence, 149 residues long: UPF0756 membrane protein BBR47_32760 (149 aa).

The next 5 membrane-spanning stretches (helical) occupy residues 3–23 (WISIILLVLLALGVIGNNATV), 48–68 (HGLQLGIIILTIGIMTPLASG), 85–105 (LLAVAVGMFVAYLAGKGTVLM), 106–126 (SQNPLIVTGLLLGTIAGVTFF), and 128–148 (GVAVGPLIAAGILAFILQFLP).

It belongs to the UPF0756 family.

The protein resides in the cell membrane. In Brevibacillus brevis (strain 47 / JCM 6285 / NBRC 100599), this protein is UPF0756 membrane protein BBR47_32760.